The chain runs to 393 residues: MAAASTSSPVVSQPQFTAMNEPQCFYNESIAFFYNRSGKYLATEWNTVSKLVMGLGITVCIFIMLANLLVMVAIYVNRRFHFPIYYLMANLAAADFFAGLAYFYLMFNTGPNTRRLTVSTWLLRQGLIDTTVTASVANLLAIAIERHITVFRMQLHTRMSNRRVVVVIVVIWTMAIVMGAIPSVGWNCICDIENCSNMAPLYSDSYLVFWAIFNLVTFVVMVVLYAHIFGYVRQRTMRMSRHSSGPRRNRDTMMSLLKTVVIVLGAFIICWTPGLVLLLLDVCCPQCDVLAYEKFFLLLAEFNSAMNPIIYSYRDKEMSATFRQILCCQRSENTSGPTEGSDRSASSLNHTILAGVHSNDHSVFRKETKMRGGHHLLRDEQPPPPERPGQGRV.

At 1-50 (MAAASTSSPVVSQPQFTAMNEPQCFYNESIAFFYNRSGKYLATEWNTVSK) the chain is on the extracellular side. 2 disulfides stabilise this stretch: Cys24/Cys190 and Cys188/Cys195. N-linked (GlcNAc...) asparagine glycans are attached at residues Asn27 and Asn35. Lys39 lines the a 1-acyl-sn-glycero-3-phosphate pocket. Residues 51–75 (LVMGLGITVCIFIMLANLLVMVAIY) form a helical membrane-spanning segment. The Cytoplasmic portion of the chain corresponds to 76–83 (VNRRFHFP). The chain crosses the membrane as a helical span at residues 84 to 107 (IYYLMANLAAADFFAGLAYFYLMF). Topologically, residues 108–121 (NTGPNTRRLTVSTW) are extracellular. Residues 122-144 (LLRQGLIDTTVTASVANLLAIAI) form a helical membrane-spanning segment. 124–129 (RQGLID) lines the a 1-acyl-sn-glycero-3-phosphate pocket. Over 145–163 (ERHITVFRMQLHTRMSNRR) the chain is Cytoplasmic. The chain crosses the membrane as a helical span at residues 164-184 (VVVVIVVIWTMAIVMGAIPSV). Residues 185–204 (GWNCICDIENCSNMAPLYSD) lie on the Extracellular side of the membrane. A helical transmembrane segment spans residues 205 to 225 (SYLVFWAIFNLVTFVVMVVLY). Residue Trp210 coordinates a 1-acyl-sn-glycero-3-phosphate. At 226–255 (AHIFGYVRQRTMRMSRHSSGPRRNRDTMMS) the chain is on the cytoplasmic side. A helical transmembrane segment spans residues 256 to 280 (LLKTVVIVLGAFIICWTPGLVLLLL). The Extracellular segment spans residues 281 to 294 (DVCCPQCDVLAYEK). An intrachain disulfide couples Cys284 to Cys287. Residues 295–315 (FFLLLAEFNSAMNPIIYSYRD) traverse the membrane as a helical segment. The Cytoplasmic portion of the chain corresponds to 316 to 393 (KEMSATFRQI…PPERPGQGRV (78 aa)). At Ser341 the chain carries Phosphoserine. At Thr351 the chain carries Phosphothreonine. Residues 369–381 (KMRGGHHLLRDEQ) show a composition bias toward basic and acidic residues. The interval 369-393 (KMRGGHHLLRDEQPPPPERPGQGRV) is disordered.

It belongs to the G-protein coupled receptor 1 family. As to quaternary structure, interacts with RALA and GRK2. Interacts with GNAQ and GNA13. Interacts with CD14; the interaction is enhanced by exposure to bacterial lipopolysaccharide (LPS). In terms of processing, N-glycosylated. As to expression, detected in brain cortex and in pituitary pars tuberalis.

The protein resides in the cell surface. Its subcellular location is the cell membrane. It localises to the endosome. In terms of biological role, receptor for lysophosphatidic acid (LPA). Plays a role in the reorganization of the actin cytoskeleton, cell migration, differentiation and proliferation, and thereby contributes to the responses to tissue damage and infectious agents. Activates downstream signaling cascades via the G(i)/G(o), G(12)/G(13), and G(q) families of heteromeric G proteins. Signaling inhibits adenylyl cyclase activity and decreases cellular cAMP levels. Signaling triggers an increase of cytoplasmic Ca(2+) levels. Activates RALA; this leads to the activation of phospholipase C (PLC) and the formation of inositol 1,4,5-trisphosphate. Signaling mediates activation of down-stream MAP kinases. Contributes to the regulation of cell shape. Promotes Rho-dependent reorganization of the actin cytoskeleton in neuronal cells and neurite retraction. Promotes the activation of Rho and the formation of actin stress fibers. Promotes formation of lamellipodia at the leading edge of migrating cells via activation of RAC1. Through its function as LPA receptor, plays a role in chemotaxis and cell migration, including responses to injury and wounding. Plays a role in triggering inflammation in response to bacterial lipopolysaccharide (LPS) via its interaction with CD14. Promotes cell proliferation in response to LPA. Inhibits the intracellular ciliogenesis pathway in response to LPA and through AKT1 activation. Required for normal skeleton development. May play a role in osteoblast differentiation. Required for normal brain development. Required for normal proliferation, survival and maturation of newly formed neurons in the adult dentate gyrus. Plays a role in pain perception and in the initiation of neuropathic pain. The chain is Lysophosphatidic acid receptor 1 (LPAR1) from Ovis aries (Sheep).